A 312-amino-acid chain; its full sequence is Ribosomal RNA small subunit methyltransferase H (312 aa).

S-adenosyl-L-methionine-binding positions include 34–36, Asp54, Phe81, Asp102, and Gln109; that span reads AGH.

The protein belongs to the methyltransferase superfamily. RsmH family.

Its subcellular location is the cytoplasm. It carries out the reaction cytidine(1402) in 16S rRNA + S-adenosyl-L-methionine = N(4)-methylcytidine(1402) in 16S rRNA + S-adenosyl-L-homocysteine + H(+). Specifically methylates the N4 position of cytidine in position 1402 (C1402) of 16S rRNA. This Citrifermentans bemidjiense (strain ATCC BAA-1014 / DSM 16622 / JCM 12645 / Bem) (Geobacter bemidjiensis) protein is Ribosomal RNA small subunit methyltransferase H.